The primary structure comprises 133 residues: Glycophorin-A (133 aa).

O-linked (GalNAc...) threonine glycosylation is found at Thr-1 and Thr-6. Residues Thr-1 to Val-34 are disordered. Topologically, residues Thr-1–Glu-62 are extracellular. O-linked (GalNAc...) serine glycosylation is present at Ser-11. A glycan (O-linked (GalNAc...) threonine) is linked at Thr-13. An N-linked (GlcNAc...) asparagine glycan is attached at Asn-19. Thr-21, Thr-23, and Thr-30 each carry an O-linked (GalNAc...) threonine glycan. Ser-31 carries O-linked (GalNAc...) serine glycosylation. N-linked (GlcNAc...) asparagine glycosylation is present at Asn-39. Residues Thr-41 and Thr-48 are each glycosylated (O-linked (GalNAc...) threonine). Residues Ile-63–Ile-85 form a helical membrane-spanning segment. Residues Arg-86–Ser-133 lie on the Cytoplasmic side of the membrane. Residues Leu-93–Ser-133 are disordered.

It belongs to the glycophorin-A family. In terms of assembly, homodimer. Component of the ankyrin-1 complex in the erythrocyte, composed of ANK1, RHCE, RHAG, SLC4A1, EPB42, GYPA, GYPB and AQP1. Interacts with SLC4A1; a GYPA monomer is bound at each end of the SLC4A1 dimer forming a heterotetramer.

Its subcellular location is the membrane. In terms of biological role, component of the ankyrin-1 complex, a multiprotein complex involved in the stability and shape of the erythrocyte membrane. Glycophorin A is the major intrinsic membrane protein of the erythrocyte. The N-terminal glycosylated segment, which lies outside the erythrocyte membrane, has MN blood group receptors. Appears to be important for the function of SLC4A1 and is required for high activity of SLC4A1. May be involved in translocation of SLC4A1 to the plasma membrane. The polypeptide is Glycophorin-A (Sus scrofa (Pig)).